Consider the following 469-residue polypeptide: Cytochrome c biogenesis protein CcsB (469 aa).

3 consecutive transmembrane segments (helical) span residues 30–50, 89–109, and 175–195; these read LRLAIGLLLAIAVLSATGTVI, TPWFLAILILFGSSLAACSLT, and IGPILVHVSMLLILLGAIWGS.

The protein belongs to the Ccs1/CcsB family. May interact with CcsA.

The protein localises to the cellular thylakoid membrane. Its function is as follows. Required during biogenesis of c-type cytochromes (cytochrome c6 and cytochrome f) at the step of heme attachment. The protein is Cytochrome c biogenesis protein CcsB of Synechococcus sp. (strain JA-2-3B'a(2-13)) (Cyanobacteria bacterium Yellowstone B-Prime).